A 181-amino-acid polypeptide reads, in one-letter code: Major urinary protein (181 aa).

Positions 1 to 19 (MKLLLLLLCLGLTLVCGHA) are cleaved as a signal peptide. Asparagine 54 carries an N-linked (GlcNAc...) asparagine glycan. Cysteine 83 and cysteine 176 are joined by a disulfide.

It belongs to the calycin superfamily. Lipocalin family. Abundant in the urine of adult male rats but absent from that of females.

The protein localises to the cytoplasm. It localises to the cytosol. Its subcellular location is the secreted. In terms of biological role, major urinary proteins (Mups) bind and release pheromones. They may also protect pheromones from oxidation. In this context, they play a role in the regulation of social behaviors, such as aggression, mating, pup-suckling, territory establishment and dominance. Acts as a kairomone, detected by the prey vomeronasal organ and inducing fear reactions in mice. The sequence is that of Major urinary protein from Rattus norvegicus (Rat).